The chain runs to 529 residues: MQQRRPVRRALLSVSDKAGIVEFAQALSARGVELLSTGGTARLLAEKGLPVTEVSDYTGFPEMMDGRVKTLHPKVHGGILGRRGQDDAIMEEHQIQPIDMVVVNLYPFAQTVAREGCSLEDAVENIDIGGPTMVRSAAKNHKDVAIVVKSSDYDAIIKEMDANEGSLTLATRFDLAIKAFEHTAAYDSMIANYFGSMVPAYHGESKEAAGRFPRTLNLNFIKKQDMRYGENSHQQAAFYIEENVKEASVATATQVQGKALSYNNIADTDAALECVKEFAEPACVIVKHANPCGVAIGNSILDAYDRAYKTDPTSAFGGIIAFNRELDAETAQAIISRQFVEVIIAPSASEEALKITAAKQNVRVLTCGQWGERVPGLDFKRVNGGLLVQDRDLGMVGAEELRVVTKRQPTEQELRDALFCWKVAKFVKSNAIVYAKNNMTIGIGAGQMSRVYSAKIAGIKAADEGLEVKGSSMASDAFFPFRDGIDAAAAAGVTCVIQPGGSIRDDEVIAAADEHGIAMLFTDMRHFRH.

The 148-residue stretch at Met1–Val148 folds into the MGS-like domain. At Lys287 the chain carries N6-acetyllysine.

The protein belongs to the PurH family.

The enzyme catalyses (6R)-10-formyltetrahydrofolate + 5-amino-1-(5-phospho-beta-D-ribosyl)imidazole-4-carboxamide = 5-formamido-1-(5-phospho-D-ribosyl)imidazole-4-carboxamide + (6S)-5,6,7,8-tetrahydrofolate. The catalysed reaction is IMP + H2O = 5-formamido-1-(5-phospho-D-ribosyl)imidazole-4-carboxamide. It functions in the pathway purine metabolism; IMP biosynthesis via de novo pathway; 5-formamido-1-(5-phospho-D-ribosyl)imidazole-4-carboxamide from 5-amino-1-(5-phospho-D-ribosyl)imidazole-4-carboxamide (10-formyl THF route): step 1/1. The protein operates within purine metabolism; IMP biosynthesis via de novo pathway; IMP from 5-formamido-1-(5-phospho-D-ribosyl)imidazole-4-carboxamide: step 1/1. This chain is Bifunctional purine biosynthesis protein PurH, found in Escherichia coli O17:K52:H18 (strain UMN026 / ExPEC).